Here is a 1092-residue protein sequence, read N- to C-terminus: SUMO-specific isopeptidase USPL1 (1092 aa).

2 disordered regions span residues 145–168 and 185–207; these read VYDE…TADS and TKDP…EGCT. Composition is skewed to polar residues over residues 148–163 and 197–206; these read ETSS…QNPI and GRPSPQNEGC. One can recognise a USP domain in the interval 227–500; the sequence is VQWKNAYALC…EIHIVIWERK (274 aa). Residue Cys236 is the Nucleophile of the active site. An SUMO-binding region spans residues 236–495; the sequence is CWLDCILSAL…EVPASEIHIV (260 aa). His456 (proton acceptor) is an active-site residue. 3 disordered regions span residues 713 to 749, 797 to 859, and 904 to 930; these read LKPE…SLKE, GGFK…STSC, and AALM…GSPN. Residues 732-748 show a composition bias toward polar residues; sequence ADSQTTTSKSLQNQSLK. Residues 810-819 show a composition bias toward basic residues; the sequence is HVSKKARKSA. The span at 821–832 shows a compositional bias: pro residues; it reads KPPPISKPPAGP. At Ser909 the chain carries Phosphoserine.

This sequence belongs to the peptidase C19 family. Interacts with ELL.

The protein resides in the nucleus. It localises to the cajal body. Its function is as follows. SUMO-specific isopeptidase involved in protein desumoylation. Specifically binds SUMO proteins with a higher affinity for SUMO2 and SUMO3 which it cleaves more efficiently. Also able to process full-length SUMO proteins to their mature forms. Plays a key role in RNA polymerase-II-mediated snRNA transcription in the Cajal bodies. Is a component of complexes that can bind to U snRNA genes. The sequence is that of SUMO-specific isopeptidase USPL1 (USPL1) from Homo sapiens (Human).